A 79-amino-acid chain; its full sequence is UPF0154 protein lwe1321 (79 aa).

Residues 2-22 (WIYILVGIICLLAGLAGGFFI) traverse the membrane as a helical segment. Positions 57-66 (KINQMMSAMN) are enriched in polar residues. The disordered stretch occupies residues 57–79 (KINQMMSAMNKQQEKEKPKKAKK).

Belongs to the UPF0154 family.

It is found in the cell membrane. This Listeria welshimeri serovar 6b (strain ATCC 35897 / DSM 20650 / CCUG 15529 / CIP 8149 / NCTC 11857 / SLCC 5334 / V8) protein is UPF0154 protein lwe1321.